A 330-amino-acid polypeptide reads, in one-letter code: Phosphate acyltransferase (330 aa).

It belongs to the PlsX family. As to quaternary structure, homodimer. Probably interacts with PlsY.

Its subcellular location is the cytoplasm. The enzyme catalyses a fatty acyl-[ACP] + phosphate = an acyl phosphate + holo-[ACP]. It participates in lipid metabolism; phospholipid metabolism. Catalyzes the reversible formation of acyl-phosphate (acyl-PO(4)) from acyl-[acyl-carrier-protein] (acyl-ACP). This enzyme utilizes acyl-ACP as fatty acyl donor, but not acyl-CoA. The sequence is that of Phosphate acyltransferase from Bacillus cereus (strain G9842).